We begin with the raw amino-acid sequence, 443 residues long: Protoheme IX farnesyltransferase, mitochondrial (443 aa).

Transmembrane regions (helical) follow at residues 174–194 (AAGFALAPGPFDWPCFLLTSV), 235–255 (LAVSFATCCAVPGVAILTLGV), 257–277 (PLTGALGLFNIFLYTCCYTPL), 280–300 (ISIANTWVGAVVGAIPPVMGW), 309–329 (AGAFLLGGILYSWQFPHFNAL), 364–384 (LLVLSAAAPVLDITTWTFPIM), and 411–431 (LFFCSLWHLPLLLLLMLTCKR).

Belongs to the UbiA prenyltransferase family.

The protein localises to the mitochondrion membrane. The catalysed reaction is heme b + (2E,6E)-farnesyl diphosphate + H2O = Fe(II)-heme o + diphosphate. In terms of biological role, converts protoheme IX and farnesyl diphosphate to heme O. This Homo sapiens (Human) protein is Protoheme IX farnesyltransferase, mitochondrial (COX10).